A 620-amino-acid polypeptide reads, in one-letter code: 1-deoxy-D-xylulose-5-phosphate synthase (620 aa).

Residues H80 and G121 to S123 each bind thiamine diphosphate. Residue D152 participates in Mg(2+) binding. Residues G153–A154, N181, Y288, and E370 contribute to the thiamine diphosphate site. N181 is a binding site for Mg(2+).

This sequence belongs to the transketolase family. DXPS subfamily. As to quaternary structure, homodimer. Mg(2+) serves as cofactor. Thiamine diphosphate is required as a cofactor.

It carries out the reaction D-glyceraldehyde 3-phosphate + pyruvate + H(+) = 1-deoxy-D-xylulose 5-phosphate + CO2. The protein operates within metabolic intermediate biosynthesis; 1-deoxy-D-xylulose 5-phosphate biosynthesis; 1-deoxy-D-xylulose 5-phosphate from D-glyceraldehyde 3-phosphate and pyruvate: step 1/1. In terms of biological role, catalyzes the acyloin condensation reaction between C atoms 2 and 3 of pyruvate and glyceraldehyde 3-phosphate to yield 1-deoxy-D-xylulose-5-phosphate (DXP). In Shigella flexneri, this protein is 1-deoxy-D-xylulose-5-phosphate synthase.